The following is a 231-amino-acid chain: Large ribosomal subunit protein uL1 (231 aa).

Belongs to the universal ribosomal protein uL1 family. In terms of assembly, part of the 50S ribosomal subunit.

Binds directly to 23S rRNA. The L1 stalk is quite mobile in the ribosome, and is involved in E site tRNA release. Its function is as follows. Protein L1 is also a translational repressor protein, it controls the translation of the L11 operon by binding to its mRNA. This chain is Large ribosomal subunit protein uL1, found in Halalkalibacterium halodurans (strain ATCC BAA-125 / DSM 18197 / FERM 7344 / JCM 9153 / C-125) (Bacillus halodurans).